We begin with the raw amino-acid sequence, 154 residues long: Myoglobin (154 aa).

The region spanning 2–148 is the Globin domain; it reads GLSDQEWQQV…FRNDMASKYK (147 aa). Nitrite is bound at residue histidine 65. O2 is bound at residue histidine 65. Residue histidine 94 participates in heme b binding.

Belongs to the globin family. As to quaternary structure, monomeric.

The protein localises to the cytoplasm. It localises to the sarcoplasm. It catalyses the reaction Fe(III)-heme b-[protein] + nitric oxide + H2O = Fe(II)-heme b-[protein] + nitrite + 2 H(+). The enzyme catalyses H2O2 + AH2 = A + 2 H2O. Monomeric heme protein which primary function is to store oxygen and facilitate its diffusion within muscle tissues. Reversibly binds oxygen through a pentacoordinated heme iron and enables its timely and efficient release as needed during periods of heightened demand. Depending on the oxidative conditions of tissues and cells, and in addition to its ability to bind oxygen, it also has a nitrite reductase activity whereby it regulates the production of bioactive nitric oxide. Under stress conditions, like hypoxia and anoxia, it also protects cells against reactive oxygen species thanks to its pseudoperoxidase activity. The polypeptide is Myoglobin (MB) (Aethia pygmaea (Whiskered auklet)).